The chain runs to 83 residues: Conotoxin Im22.1 (83 aa).

The N-terminal stretch at 1 to 18 (MMMRVFIAMFFLLALVEA) is a signal peptide. Positions 19-26 (GWPRLYDK) are excised as a propeptide.

The protein belongs to the conotoxin E superfamily. Contain 4 disulfide bonds. As to expression, expressed by the venom duct.

Its subcellular location is the secreted. Probable neurotoxin. This Conus imperialis (Imperial cone) protein is Conotoxin Im22.1.